Consider the following 534-residue polypeptide: Light-independent protochlorophyllide reductase subunit B (534 aa).

A [4Fe-4S] cluster-binding site is contributed by D36. The Proton donor role is filled by D274. 409–410 (GL) provides a ligand contact to substrate. The disordered stretch occupies residues 426–446 (DEAGPSHHGGKAVPASAPRAD).

The protein belongs to the ChlB/BchB/BchZ family. In terms of assembly, protochlorophyllide reductase is composed of three subunits; BchL, BchN and BchB. Forms a heterotetramer of two BchB and two BchN subunits. It depends on [4Fe-4S] cluster as a cofactor.

It catalyses the reaction chlorophyllide a + oxidized 2[4Fe-4S]-[ferredoxin] + 2 ADP + 2 phosphate = protochlorophyllide a + reduced 2[4Fe-4S]-[ferredoxin] + 2 ATP + 2 H2O. It participates in porphyrin-containing compound metabolism; bacteriochlorophyll biosynthesis (light-independent). Component of the dark-operative protochlorophyllide reductase (DPOR) that uses Mg-ATP and reduced ferredoxin to reduce ring D of protochlorophyllide (Pchlide) to form chlorophyllide a (Chlide). This reaction is light-independent. The NB-protein (BchN-BchB) is the catalytic component of the complex. This is Light-independent protochlorophyllide reductase subunit B from Cereibacter sphaeroides (strain ATCC 17023 / DSM 158 / JCM 6121 / CCUG 31486 / LMG 2827 / NBRC 12203 / NCIMB 8253 / ATH 2.4.1.) (Rhodobacter sphaeroides).